Reading from the N-terminus, the 213-residue chain is MSDNNQCVIVGIAGASASGKSLIASTIYNELRAKVGDHQIGVITEDCYYNDQSHLSMEERVKTNYDHPSALDHDLLCEHLEKLVRGEAVEVPEYSYTEHTRTSNTTTMTPKKVIILEGILLLTDPRLRDLMHATVFMDTPLDICLLRRVKRDVEERGRTMESVLKQYQQTVRPMFMQFIEPSKQYADIIVPRGGKNRIAIDVLKAHIAKLLKA.

14 to 21 (GASASGKS) serves as a coordination point for ATP.

It belongs to the uridine kinase family.

It localises to the cytoplasm. It catalyses the reaction uridine + ATP = UMP + ADP + H(+). The catalysed reaction is cytidine + ATP = CMP + ADP + H(+). It participates in pyrimidine metabolism; CTP biosynthesis via salvage pathway; CTP from cytidine: step 1/3. Its pathway is pyrimidine metabolism; UMP biosynthesis via salvage pathway; UMP from uridine: step 1/1. The sequence is that of Uridine kinase from Vibrio parahaemolyticus serotype O3:K6 (strain RIMD 2210633).